Consider the following 417-residue polypeptide: Tyrosine--tRNA ligase (417 aa).

Residue Tyr39 coordinates L-tyrosine. The 'HIGH' region signature appears at 44–53 (CTAPSLHVGH). Residues Tyr176 and Gln180 each contribute to the L-tyrosine site. The short motif at 236-240 (KMGKT) is the 'KMSKS' region element. Lys239 serves as a coordination point for ATP. One can recognise an S4 RNA-binding domain in the interval 350-417 (AGVLALFVKA…KKRHVLLRPA (68 aa)).

The protein belongs to the class-I aminoacyl-tRNA synthetase family. TyrS type 1 subfamily. Homodimer.

Its subcellular location is the cytoplasm. It catalyses the reaction tRNA(Tyr) + L-tyrosine + ATP = L-tyrosyl-tRNA(Tyr) + AMP + diphosphate + H(+). In terms of biological role, catalyzes the attachment of tyrosine to tRNA(Tyr) in a two-step reaction: tyrosine is first activated by ATP to form Tyr-AMP and then transferred to the acceptor end of tRNA(Tyr). This chain is Tyrosine--tRNA ligase, found in Nitrobacter winogradskyi (strain ATCC 25391 / DSM 10237 / CIP 104748 / NCIMB 11846 / Nb-255).